The following is a 1123-amino-acid chain: Telomerase reverse transcriptase (1123 aa).

2 disordered regions span residues 191–242 (ENKR…KTTK) and 410–439 (GTTS…PKCP). The span at 201-210 (QPPTKRQWLS) shows a compositional bias: polar residues. Residues 596–929 (LVDDAEAESS…PFVRWTGLLI (334 aa)) form the Reverse transcriptase domain. Residues aspartate 691, aspartate 860, and aspartate 861 each contribute to the Mg(2+) site.

This sequence belongs to the reverse transcriptase family. Telomerase subfamily. Component of the telomerase ribonucleoprotein complex. Interacts with POT1A.

Its subcellular location is the nucleus. The protein resides in the chromosome. It localises to the telomere. It carries out the reaction DNA(n) + a 2'-deoxyribonucleoside 5'-triphosphate = DNA(n+1) + diphosphate. Its function is as follows. Telomerase is a ribonucleoprotein enzyme essential for the replication of chromosome termini in most eukaryotes. It elongates telomeres. It is a reverse transcriptase that adds simple sequence repeats to chromosome ends by copying a template sequence within the RNA component of the enzyme. Required to prevent genome instability induced by breakage-fusion-bridge (BFB) cycles. Can extend completely non-telomeric sequences using RNA template in vitro. The sequence is that of Telomerase reverse transcriptase (TERT) from Arabidopsis thaliana (Mouse-ear cress).